The primary structure comprises 283 residues: Shikimate dehydrogenase (NADP(+)) (283 aa).

Shikimate contacts are provided by residues 16–18 and Thr63; that span reads SLS. Lys67 functions as the Proton acceptor in the catalytic mechanism. Asp79 is a binding site for NADP(+). The shikimate site is built by Asn88 and Asp103. Residues 128-132, Ala223, and Gly243 each bind NADP(+); that span reads GAGGA.

It belongs to the shikimate dehydrogenase family. Homodimer.

The catalysed reaction is shikimate + NADP(+) = 3-dehydroshikimate + NADPH + H(+). Its pathway is metabolic intermediate biosynthesis; chorismate biosynthesis; chorismate from D-erythrose 4-phosphate and phosphoenolpyruvate: step 4/7. Functionally, involved in the biosynthesis of the chorismate, which leads to the biosynthesis of aromatic amino acids. Catalyzes the reversible NADPH linked reduction of 3-dehydroshikimate (DHSA) to yield shikimate (SA). The chain is Shikimate dehydrogenase (NADP(+)) from Xanthomonas oryzae pv. oryzae (strain MAFF 311018).